Here is a 451-residue protein sequence, read N- to C-terminus: BAHD acyltransferase At3g29680 (451 aa).

Catalysis depends on proton acceptor residues His-161 and Asp-393.

It belongs to the plant acyltransferase family.

This chain is BAHD acyltransferase At3g29680, found in Arabidopsis thaliana (Mouse-ear cress).